A 584-amino-acid polypeptide reads, in one-letter code: Transcription factor 7-like 1 (584 aa).

The segment covering 1-28 has biased composition (gly residues); the sequence is MPQLGGGRGGAGGGGGGSGAGATSGGDD. The interval 1–71 is CTNNB1-binding; it reads MPQLGGGRGG…VKSSLVNESE (71 aa). 3 disordered regions span residues 1–99, 159–179, and 194–231; these read MPQL…RDYF, ATVKDTRSPSPAHLSNKVPVV, and YSNDHFSPASPPTHLSPEIDPKTGIPRPPHPSELSPYY. Over residues 64–78 the composition is skewed to low complexity; sequence SSLVNESENQSSSSD. Positions 80 to 99 are enriched in basic and acidic residues; that stretch reads EAERRPQPARDAFQKPRDYF. Residues 342–410 constitute a DNA-binding region (HMG box); sequence VKKPLNAFML…LHAQLYPTWS (69 aa). The disordered stretch occupies residues 412-501; that stretch reads RDNYGKKKKR…HSEQAQPLSL (90 aa). The short motif at 417 to 423 is the Nuclear localization signal element; the sequence is KKKKRKR. Low complexity-rich tracts occupy residues 427–437 and 470–491; these read LSQTQSQQQIQ and SALDSPATPSAALASPAAPAAT. Residues 492 to 501 are compositionally biased toward polar residues; that stretch reads HSEQAQPLSL.

Belongs to the TCF/LEF family. In terms of assembly, binds the armadillo repeat of CTNNB1 and forms a stable complex. Interacts with DAZAP2. In terms of tissue distribution, detected in the basal layer of epidermis and in outer root sheath and bulge of hair follicles.

Its subcellular location is the nucleus. Its function is as follows. Participates in the Wnt signaling pathway. Binds to DNA and acts as a repressor in the absence of CTNNB1, and as an activator in its presence. Necessary for the terminal differentiation of epidermal cells, the formation of keratohyalin granules and the development of the barrier function of the epidermis. This is Transcription factor 7-like 1 (Tcf7l1) from Mus musculus (Mouse).